A 607-amino-acid chain; its full sequence is Major facilitator superfamily multidrug transporter mdrA (607 aa).

The next 12 membrane-spanning stretches (helical) occupy residues 77 to 97 (MTVAVSTLAVALVSSAYTGGV), 110 to 130 (VATLGVSLFVLGFAIGPLLWA), 139 to 159 (QIIFTVTYCALTAFNAGSAGA), 170 to 190 (FFAGAFGASPLTNAGGVIADM), 202 to 222 (LFAAAPFLGPVLGPIIGGFLG), 229 to 249 (WVMGFLGAFSGAVWIICTIFV), 305 to 325 (PIVFLLSLYMAIIYGTLYMLF), 342 to 362 (VSSLPFLGIMVGMMFAVTYSV), 385 to 405 (LPPTLIASVAIPIGLFWFAWT), 413 to 433 (IVCILAGAPFGFGMVLVFLGI), 443 to 463 (IFAASVLAANSVLRSIFGAVF), and 478 to 498 (WASSIPAFLALACVPFPFLFY). A disordered region spans residues 523 to 583 (EQMKQAPEPE…ASTRTASSLR (61 aa)). The segment covering 553–564 (DVSETESNVEEL) has biased composition (acidic residues). The span at 572–583 (SRASTRTASSLR) shows a compositional bias: low complexity.

It belongs to the major facilitator superfamily. DHA1 family. Polyamines/proton antiporter (TC 2.A.1.2.16) subfamily.

It localises to the cell membrane. Its function is as follows. MFS transporter involved in the basal level of azole susceptibility. Confers resistance to voriconazole and, to a lesser extent, to fluconazole. The protein is Major facilitator superfamily multidrug transporter mdrA of Aspergillus fumigatus (strain ATCC MYA-4609 / CBS 101355 / FGSC A1100 / Af293) (Neosartorya fumigata).